Here is an 862-residue protein sequence, read N- to C-terminus: Protein PRQFV-amide (862 aa).

The signal sequence occupies residues 1–20 (MSSQLLICSVFVLFTFGPNS). Residues 21 to 79 (FPSCLAQEQAGNSDATQLSADAKAPESAKDKSGDVQNDGTKSVRSKRDLEIDFGSGDVQ) constitute a propeptide that is removed on maturation. A disordered region spans residues 32–68 (NSDATQLSADAKAPESAKDKSGDVQNDGTKSVRSKRD). Residues 43–53 (KAPESAKDKSG) are compositionally biased toward basic and acidic residues. V86 is subject to Valine amide. A propeptide spanning residues 90–149 (AAPPVFQTPLVQDKISGFIPSETESPVIGEFAFPGSVFMDDEEALGAEEEPMDDEDLEFY) is cleaved from the precursor. Position 156 is a valine amide (V156). Residues 160–175 (GIDDYLLQEKLKDFIE) constitute a propeptide that is removed on maturation. A valine amide mark is found at V182, V190, V198, V206, V214, V222, V230, V238, and V246. Residues 250-259 (EADPSFLFED) constitute a propeptide that is removed on maturation. The residue at position 266 (V266) is a Valine amide. A propeptide spanning residues 270 to 300 (SLDFLGGANWYNPYDVTMEPQSEGSDLQGFS) is cleaved from the precursor. Valine amide is present on V307. Residues 311 to 319 (DAFDMFEFS) constitute a propeptide that is removed on maturation. At V326 the chain carries Valine amide. Residues 330–338 (DQDEMFDFS) constitute a propeptide that is removed on maturation. V345 is subject to Valine amide. A propeptide spanning residues 349–357 (DLQEFFDLS) is cleaved from the precursor. V364 carries the valine amide modification. Positions 368–376 (EFDDEIDFS) are excised as a propeptide. V383 bears the Valine amide mark. The propeptide occupies 387–395 (ENDDDFDLS). V402 carries the valine amide modification. Positions 406–414 (ENDDEFDLS) are excised as a propeptide. V421 is modified (valine amide). The segment covering 424–434 (RENDDELEFSK) has biased composition (basic and acidic residues). The tract at residues 424–528 (RENDDELEFS…NNDDLDFSKR (105 aa)) is disordered. A propeptide spanning residues 425–433 (ENDDELEFS) is cleaved from the precursor. Position 440 is a valine amide (V440). Positions 441–452 (GKREDDEIDFSK) are enriched in basic and acidic residues. The propeptide occupies 444 to 451 (EDDEIDFS). A Valine amide modification is found at V458. Basic and acidic residues predominate over residues 459–471 (GKRENDGEIDFSK). Positions 462–470 (ENDGEIDFS) are excised as a propeptide. V477 bears the Valine amide mark. Basic and acidic residues predominate over residues 478-490 (GKRENDDEIDFSK). Positions 481-489 (ENDDEIDFS) are excised as a propeptide. At V496 the chain carries Valine amide. Positions 497 to 508 (GKREDGEIDFSK) are enriched in basic and acidic residues. The propeptide occupies 500 to 507 (EDGEIDFS). Position 514 is a valine amide (V514). The segment covering 515–527 (GKRENNDDLDFSK) has biased composition (basic and acidic residues). A propeptide spanning residues 518–526 (ENNDDLDFS) is cleaved from the precursor. At V533 the chain carries Valine amide. A propeptide spanning residues 537-545 (EVDDEIDFS) is cleaved from the precursor. The tract at residues 549–634 (RQFVGKREND…RQFVGKREND (86 aa)) is disordered. Position 552 is a valine amide (V552). Basic and acidic residues predominate over residues 553 to 565 (GKRENDDDLDFSK). Positions 556-564 (ENDDDLDFS) are excised as a propeptide. Position 571 is a valine amide (V571). The segment covering 572-584 (GKRENDDDLEFSK) has biased composition (basic and acidic residues). Residues 575-583 (ENDDDLEFS) constitute a propeptide that is removed on maturation. V590 is subject to Valine amide. The propeptide occupies 594-602 (ENDPLLDFS). Valine amide is present on V609. The span at 610–622 (GKRENDDDLDFSK) shows a compositional bias: basic and acidic residues. The propeptide occupies 613 to 621 (ENDDDLDFS). V628 is subject to Valine amide. Positions 632 to 640 (ENDPLIDFS) are excised as a propeptide. V647 is subject to Valine amide. A propeptide spanning residues 651-659 (ESDGDFELS) is cleaved from the precursor. Residue V666 is modified to Valine amide. A propeptide spanning residues 670-677 (DVDGPGLS) is cleaved from the precursor. V684 is subject to Valine amide. Residues 688 to 695 (EDYDIDFA) constitute a propeptide that is removed on maturation. The residue at position 702 (V702) is a Valine amide. Positions 706–714 (GNEDEFEMS) are excised as a propeptide. V721 carries the valine amide modification. Residues 724 to 757 (RNFEELDQDFLRHMHDILDKRIPQFVSLPSLTAA) constitute a propeptide that is removed on maturation. V764 carries the valine amide modification. The propeptide occupies 768–812 (SDAAFLETLRHLRDYVGGQDEQNVSEFSYQHPYPSDLNDVGLIQQ). Residue V819 is modified to Valine amide. Residues 823–862 (GGDVDDINTTYRLGDFVSQPMSFVEEPSWLCRQLNAFGIS) constitute a propeptide that is removed on maturation.

As to expression, expressed abundantly in the abdominal ganglion, much less in the pedal and cerebral ganglia, and rarely in the buccal and pleural ganglia.

The protein localises to the secreted. In terms of biological role, PRQFV-amide may act as a modulator within the feeding system as well as in other systems of Aplysia. The sequence is that of Protein PRQFV-amide from Aplysia californica (California sea hare).